Here is a 2380-residue protein sequence, read N- to C-terminus: DNA polymerase epsilon catalytic subunit A (2380 aa).

The span at Tyr169–Lys196 shows a compositional bias: low complexity. 5 disordered regions span residues Tyr169–Lys209, Phe1178–Asp1210, Lys1766–Thr1787, Gln1967–Lys1998, and Lys2059–Ser2120. Residues Glu1183–Asn1201 show a composition bias toward acidic residues. The segment covering Asn1767–Asn1776 has biased composition (low complexity). Positions Gly1777–Thr1787 are enriched in polar residues. Residues Asn1975–Gln1991 are compositionally biased toward acidic residues. Low complexity-rich tracts occupy residues Lys2059–Asp2081 and Ser2110–Ser2120. Residues Cys2225 and Cys2228 each coordinate Zn(2+). The segment at Cys2225 to Cys2288 adopts a CysA-type zinc-finger fold. The segment covering Ile2245–Asn2258 has biased composition (low complexity). A disordered region spans residues Ile2245–Asp2275. Over residues Asp2259–Asp2275 the composition is skewed to acidic residues. Zn(2+) contacts are provided by Cys2285 and Cys2288. Positions 2319, 2322, 2334, and 2337 each coordinate [4Fe-4S] cluster. Residues Cys2319–Cys2337 carry the CysB motif motif.

This sequence belongs to the DNA polymerase type-B family. As to quaternary structure, consists of three subunits: pole, pole2 and pole3. It depends on [4Fe-4S] cluster as a cofactor.

Its subcellular location is the nucleus. It catalyses the reaction DNA(n) + a 2'-deoxyribonucleoside 5'-triphosphate = DNA(n+1) + diphosphate. Its function is as follows. DNA polymerase II participates in chromosomal DNA replication. The polypeptide is DNA polymerase epsilon catalytic subunit A (pole) (Dictyostelium discoideum (Social amoeba)).